The chain runs to 533 residues: Protein disulfide isomerase-like 1-5 (533 aa).

The N-terminal stretch at 1–22 is a signal peptide; that stretch reads MRARRVVAAAAVLLLFAVVAVA. 2 Thioredoxin domains span residues 51–196 and 387–516; these read LGGG…KDQT and LLEG…EKLQ. C97 serves as the catalytic Nucleophile. N151 carries N-linked (GlcNAc...) asparagine glycosylation. Active-site nucleophile residues include C436 and C439. C436 and C439 form a disulfide bridge. The Prevents secretion from ER motif lies at 530–533; sequence KDEL.

The protein belongs to the protein disulfide isomerase family.

It is found in the endoplasmic reticulum lumen. It carries out the reaction Catalyzes the rearrangement of -S-S- bonds in proteins.. Acts as a protein-folding catalyst that interacts with nascent polypeptides to catalyze the formation, isomerization, and reduction or oxidation of disulfide bonds. May play a role in storage protein biogenesis. The polypeptide is Protein disulfide isomerase-like 1-5 (PDIL1-5) (Oryza sativa subsp. japonica (Rice)).